We begin with the raw amino-acid sequence, 509 residues long: ATP synthase subunit beta (509 aa).

167 to 174 (GGAGVGKT) is a binding site for ATP. The disordered stretch occupies residues 476–509 (ESLGAKMEDTSGDGAPAQSDSKSDSKGDDADKDA). A compositionally biased stretch (basic and acidic residues) spans 496 to 509 (SKSDSKGDDADKDA).

The protein belongs to the ATPase alpha/beta chains family. As to quaternary structure, F-type ATPases have 2 components, CF(1) - the catalytic core - and CF(0) - the membrane proton channel. CF(1) has five subunits: alpha(3), beta(3), gamma(1), delta(1), epsilon(1). CF(0) has three main subunits: a(1), b(2) and c(9-12). The alpha and beta chains form an alternating ring which encloses part of the gamma chain. CF(1) is attached to CF(0) by a central stalk formed by the gamma and epsilon chains, while a peripheral stalk is formed by the delta and b chains.

It localises to the cell membrane. The enzyme catalyses ATP + H2O + 4 H(+)(in) = ADP + phosphate + 5 H(+)(out). In terms of biological role, produces ATP from ADP in the presence of a proton gradient across the membrane. The catalytic sites are hosted primarily by the beta subunits. The protein is ATP synthase subunit beta of Mycobacterium sp. (strain KMS).